We begin with the raw amino-acid sequence, 54 residues long: Beta-2-microglobulin (54 aa).

One can recognise an Ig-like C1-type domain in the interval 3–41; that stretch reads KVELSDLSFNKDWSFYLLAHREFVPTATDKYACRVSHIT.

Belongs to the beta-2-microglobulin family. Heterodimer of an alpha chain and a beta chain. Beta-2-microglobulin is the beta-chain of major histocompatibility complex class I molecules.

It localises to the secreted. Component of the class I major histocompatibility complex (MHC). Involved in the presentation of peptide antigens to the immune system. In Mesocricetus auratus (Golden hamster), this protein is Beta-2-microglobulin (B2M).